Here is a 393-residue protein sequence, read N- to C-terminus: NAD(P)H-quinone oxidoreductase subunit H, chloroplastic (393 aa).

It belongs to the complex I 49 kDa subunit family. In terms of assembly, NDH is composed of at least 16 different subunits, 5 of which are encoded in the nucleus.

The protein localises to the plastid. It is found in the chloroplast thylakoid membrane. The enzyme catalyses a plastoquinone + NADH + (n+1) H(+)(in) = a plastoquinol + NAD(+) + n H(+)(out). It catalyses the reaction a plastoquinone + NADPH + (n+1) H(+)(in) = a plastoquinol + NADP(+) + n H(+)(out). Functionally, NDH shuttles electrons from NAD(P)H:plastoquinone, via FMN and iron-sulfur (Fe-S) centers, to quinones in the photosynthetic chain and possibly in a chloroplast respiratory chain. The immediate electron acceptor for the enzyme in this species is believed to be plastoquinone. Couples the redox reaction to proton translocation, and thus conserves the redox energy in a proton gradient. The polypeptide is NAD(P)H-quinone oxidoreductase subunit H, chloroplastic (Nicotiana sylvestris (Wood tobacco)).